The primary structure comprises 238 residues: DNA repair protein RecO (238 aa).

It belongs to the RecO family.

Involved in DNA repair and RecF pathway recombination. This is DNA repair protein RecO from Aliivibrio salmonicida (strain LFI1238) (Vibrio salmonicida (strain LFI1238)).